The following is a 283-amino-acid chain: 3-methyl-2-oxobutanoate hydroxymethyltransferase (283 aa).

Residues Asp46 and Asp85 each contribute to the Mg(2+) site. Residues 46 to 47, Asp85, and Lys115 each bind 3-methyl-2-oxobutanoate; that span reads DS. Glu117 is a binding site for Mg(2+). Glu184 functions as the Proton acceptor in the catalytic mechanism.

It belongs to the PanB family. In terms of assembly, homodecamer; pentamer of dimers. It depends on Mg(2+) as a cofactor.

The protein localises to the cytoplasm. It carries out the reaction 3-methyl-2-oxobutanoate + (6R)-5,10-methylene-5,6,7,8-tetrahydrofolate + H2O = 2-dehydropantoate + (6S)-5,6,7,8-tetrahydrofolate. Its pathway is cofactor biosynthesis; (R)-pantothenate biosynthesis; (R)-pantoate from 3-methyl-2-oxobutanoate: step 1/2. In terms of biological role, catalyzes the reversible reaction in which hydroxymethyl group from 5,10-methylenetetrahydrofolate is transferred onto alpha-ketoisovalerate to form ketopantoate. The protein is 3-methyl-2-oxobutanoate hydroxymethyltransferase of Acetivibrio thermocellus (strain ATCC 27405 / DSM 1237 / JCM 9322 / NBRC 103400 / NCIMB 10682 / NRRL B-4536 / VPI 7372) (Clostridium thermocellum).